The chain runs to 478 residues: Keratin, type II cytoskeletal 8 (478 aa).

A head region spans residues Met-1–Gln-97. Position 9 is a phosphoserine; by PKC/PRKCE (Ser-9). Lys-11 is covalently cross-linked (Glycyl lysine isopeptide (Lys-Gly) (interchain with G-Cter in SUMO2)). 4 positions are modified to phosphoserine: Ser-13, Ser-15, Ser-21, and Ser-22. The tract at residues Ala-16–Ser-44 is disordered. Arg-23 is subject to Omega-N-methylarginine. Phosphoserine; by PKC/PRKCE is present on Ser-24. Thr-26 carries the phosphothreonine modification. A phosphoserine mark is found at Ser-27 and Ser-31. At Arg-32 the chain carries Omega-N-methylarginine. Phosphoserine occurs at positions 34 and 39. Omega-N-methylarginine is present on Arg-40. Ser-43 and Ser-44 each carry phosphoserine. Arg-48 is subject to Asymmetric dimethylarginine; alternate. At Arg-48 the chain carries Omega-N-methylarginine; alternate. At Ser-81 the chain carries Phosphoserine; by MAPK. Positions Glu-98–Leu-133 are coil 1A. The IF rod domain maps to Glu-98–Leu-409. N6-malonyllysine is present on Lys-108. Glycyl lysine isopeptide (Lys-Gly) (interchain with G-Cter in SUMO2) cross-links involve residues Lys-129 and Lys-137. Residues Gln-134 to Tyr-150 form a linker 1 region. Positions Ile-151–Met-242 are coil 1B. Lys-204 participates in a covalent cross-link: Glycyl lysine isopeptide (Lys-Gly) (interchain with G-Cter in SUMO1); alternate. A Glycyl lysine isopeptide (Lys-Gly) (interchain with G-Cter in SUMO2); alternate cross-link involves residue Lys-204. Lys-214 bears the N6-acetyllysine mark. At Tyr-235 the chain carries Phosphotyrosine. Residues Gln-243–Ile-266 are linker 12. The coil 2 stretch occupies residues Ile-267–Glu-405. The segment at Ala-268 to Leu-389 is necessary for interaction with PNN. Lys-271 participates in a covalent cross-link: Glycyl lysine isopeptide (Lys-Gly) (interchain with G-Cter in SUMO2). Ser-281 is subject to Phosphoserine. Lys-292 participates in a covalent cross-link: Glycyl lysine isopeptide (Lys-Gly) (interchain with G-Cter in SUMO2). Lys-302 is covalently cross-linked (Glycyl lysine isopeptide (Lys-Gly) (interchain with G-Cter in SUMO2); alternate). N6-acetyllysine; alternate is present on Lys-302. A Glycyl lysine isopeptide (Lys-Gly) (interchain with G-Cter in SUMO2) cross-link involves residue Lys-311. A Glycyl lysine isopeptide (Lys-Gly) (interchain with G-Cter in SUMO2); alternate cross-link involves residue Lys-332. The residue at position 332 (Lys-332) is an N6-acetyllysine; alternate. A Phosphoserine modification is found at Ser-337. Lys-400 participates in a covalent cross-link: Glycyl lysine isopeptide (Lys-Gly) (interchain with G-Cter in SUMO2). Residues Glu-406–Lys-478 are tail. Phosphoserine is present on residues Ser-407, Ser-411, Ser-417, Ser-424, and Ser-433. A Glycyl lysine isopeptide (Lys-Gly) (interchain with G-Cter in SUMO1); alternate cross-link involves residue Lys-467. Residue Lys-467 forms a Glycyl lysine isopeptide (Lys-Gly) (interchain with G-Cter in SUMO2); alternate linkage. Ser-470, Ser-472, Ser-473, and Ser-477 each carry phosphoserine.

Belongs to the intermediate filament family. In terms of assembly, heterotetramer of two type I and two type II keratins. Forms a heterodimer with KRT18. Associates with KRT20. Interacts with PNN. When associated with KRT19, interacts with DMD. Interacts with TCHP. Interacts with APEX1. Interacts with GPER1. Interacts with EPPK1. Interacts with PKP1 and PKP2. Post-translationally, O-glycosylated. O-GlcNAcylation at multiple sites increases solubility, and decreases stability by inducing proteasomal degradation. In terms of processing, O-glycosylated (O-GlcNAcylated), in a cell cycle-dependent manner. In terms of tissue distribution, expressed in bladder, liver, exocervix and (in very low amounts) esophagus.

Its subcellular location is the cytoplasm. The protein resides in the nucleus. It is found in the nucleoplasm. The protein localises to the nucleus matrix. In terms of biological role, together with KRT19, helps to link the contractile apparatus to dystrophin at the costameres of striated muscle. This is Keratin, type II cytoskeletal 8 (KRT8) from Bos taurus (Bovine).